A 101-amino-acid polypeptide reads, in one-letter code: MISVGHYLAVSAVLFTLGVLGIFINRKNIIVILMAIELILLAVNINLVAFSAALGDLVGQVFSMFVLTVAAGEAAIGLAILVIYFRGRGTIAVDDANRMKG.

Helical transmembrane passes span 4–24, 29–49, and 65–85; these read VGHYLAVSAVLFTLGVLGIFI, IIVILMAIELILLAVNINLVA, and FVLTVAAGEAAIGLAILVIYF.

This sequence belongs to the complex I subunit 4L family. As to quaternary structure, NDH-1 is composed of 14 different subunits. Subunits NuoA, H, J, K, L, M, N constitute the membrane sector of the complex.

Its subcellular location is the cell inner membrane. The enzyme catalyses a quinone + NADH + 5 H(+)(in) = a quinol + NAD(+) + 4 H(+)(out). NDH-1 shuttles electrons from NADH, via FMN and iron-sulfur (Fe-S) centers, to quinones in the respiratory chain. The immediate electron acceptor for the enzyme in this species is believed to be ubiquinone. Couples the redox reaction to proton translocation (for every two electrons transferred, four hydrogen ions are translocated across the cytoplasmic membrane), and thus conserves the redox energy in a proton gradient. In Sphingopyxis alaskensis (strain DSM 13593 / LMG 18877 / RB2256) (Sphingomonas alaskensis), this protein is NADH-quinone oxidoreductase subunit K.